The chain runs to 505 residues: Probable ribonuclease FAU-1 (505 aa).

The disordered stretch occupies residues I389 to D408.

The protein belongs to the FAU-1 family.

Its function is as follows. Probable RNase involved in rRNA stability through maturation and/or degradation of precursor rRNAs. Binds to RNA in loop regions with AU-rich sequences. This chain is Probable ribonuclease FAU-1, found in Haloquadratum walsbyi (strain DSM 16790 / HBSQ001).